A 670-amino-acid polypeptide reads, in one-letter code: Lebercilin-like protein (670 aa).

A disordered region spans residues 30 to 51 (KRSPGTGDFSRNSNASNKSVDY). The span at 38–51 (FSRNSNASNKSVDY) shows a compositional bias: polar residues. 2 coiled-coil regions span residues 148–259 (LHKI…EREE) and 305–336 (AAQTATKTLQVEVKHLQQKLKEKDRELEIKNI). Positions 374–393 (HQGTQKSDVPPLTTKGKKAT) are disordered. Residues 420–440 (EDSKRKYEDLSGEEKHLEVQI) are a coiled coil. Disordered stretches follow at residues 495–516 (RSMQRNGVDDTLGKGTAPYTKG), 557–580 (KHLSNREEMELEHSDSGYEPSFGK), and 609–670 (LKTD…KIII). 2 stretches are compositionally biased toward basic and acidic residues: residues 560–572 (SNREEMELEHSDS) and 621–632 (GSEEPLQSKESH). The segment covering 651-662 (TVVNSIKPSSPT) has biased composition (polar residues).

It belongs to the LCA5 family.

This is Lebercilin-like protein (LCA5L) from Homo sapiens (Human).